Consider the following 335-residue polypeptide: tRNA N6-adenosine threonylcarbamoyltransferase (335 aa).

A divalent metal cation-binding residues include His-109, His-113, and Tyr-130. Substrate contacts are provided by residues Tyr-130–Gly-134, Asp-162, Gly-177, Glu-181, and Asn-266. Asp-294 is an a divalent metal cation binding site.

This sequence belongs to the KAE1 / TsaD family. Component of the EKC/KEOPS complex composed of at least GON7, TP53RK, TPRKB, OSGEP and LAGE3; the whole complex dimerizes. It depends on a divalent metal cation as a cofactor. In terms of tissue distribution, widely expressed at low level. Expressed at intermediate level in lung. Weakly expressed in testis, skeletal muscle, kidney, liver, spleen, brain and heart.

It is found in the cytoplasm. The protein resides in the nucleus. It carries out the reaction L-threonylcarbamoyladenylate + adenosine(37) in tRNA = N(6)-L-threonylcarbamoyladenosine(37) in tRNA + AMP + H(+). In terms of biological role, component of the EKC/KEOPS complex that is required for the formation of a threonylcarbamoyl group on adenosine at position 37 (t(6)A37) in tRNAs that read codons beginning with adenine. The complex is probably involved in the transfer of the threonylcarbamoyl moiety of threonylcarbamoyl-AMP (TC-AMP) to the N6 group of A37. OSGEP likely plays a direct catalytic role in this reaction, but requires other protein(s) of the complex to fulfill this activity. The polypeptide is tRNA N6-adenosine threonylcarbamoyltransferase (Osgep) (Mus musculus (Mouse)).